A 613-amino-acid chain; its full sequence is Alkyldihydroxyacetonephosphate synthase (613 aa).

One can recognise an FAD-binding PCMH-type domain in the interval 126-307 (IDRPPDAVIL…TEAVVKIERL (182 aa)). Residues 158–164 (PFGGGTN), 228–234 (DSYAYST), 241–244 (ARGS), and 291–297 (EGAFGLV) each bind FAD. Substrate is bound at residue arginine 437. The Proton donor/acceptor role is filled by tyrosine 498. The tract at residues 534 to 536 (HHH) is important for enzyme activity. The disordered stretch occupies residues 572–593 (NPGKLLPSPPSEKETPKATQAR). The Microbody targeting signal motif lies at 611–613 (AHL).

This sequence belongs to the FAD-binding oxidoreductase/transferase type 4 family. Homodimer. Requires FAD as cofactor.

It localises to the peroxisome. It carries out the reaction a long chain fatty alcohol + a 1-acylglycerone 3-phosphate = a 1-O-alkylglycerone 3-phosphate + a long-chain fatty acid + H(+). The protein operates within glycerolipid metabolism; ether lipid biosynthesis. Its function is as follows. Catalyzes the exchange of an acyl for a long-chain alkyl group and the formation of the ether bond in the biosynthesis of ether phospholipids. The sequence is that of Alkyldihydroxyacetonephosphate synthase from Trypanosoma brucei brucei.